The following is a 222-amino-acid chain: Probable GTP-binding protein EngB (222 aa).

An EngB-type G domain is found at 25–199 (AGVEVAFAGR…SQLLQNWFDT (175 aa)). GTP contacts are provided by residues 33–40 (GRSNAGKS), 60–64 (GRTQH), 78–81 (DLPG), 145–148 (TKAD), and 178–180 (FSS). S40 and T62 together coordinate Mg(2+).

It belongs to the TRAFAC class TrmE-Era-EngA-EngB-Septin-like GTPase superfamily. EngB GTPase family. It depends on Mg(2+) as a cofactor.

Its function is as follows. Necessary for normal cell division and for the maintenance of normal septation. This chain is Probable GTP-binding protein EngB, found in Nitrosomonas europaea (strain ATCC 19718 / CIP 103999 / KCTC 2705 / NBRC 14298).